We begin with the raw amino-acid sequence, 66 residues long: UPF0370 protein YpfN (66 aa).

Residues 4 to 24 (LAKYWWILVLVFLVGVLLNVI) traverse the membrane as a helical segment. Positions 39 to 66 (KPELPPHRDFNDKWDDEDDWPKKDQPKK) are disordered. Basic and acidic residues predominate over residues 42–51 (LPPHRDFNDK).

This sequence belongs to the UPF0370 family.

The protein resides in the cell membrane. The sequence is that of UPF0370 protein YpfN from Salmonella paratyphi C (strain RKS4594).